We begin with the raw amino-acid sequence, 446 residues long: Iron-sulfur cluster assembly SufBD family protein PH1385 (446 aa).

This sequence belongs to the iron-sulfur cluster assembly SufBD family.

The protein is Iron-sulfur cluster assembly SufBD family protein PH1385 of Pyrococcus horikoshii (strain ATCC 700860 / DSM 12428 / JCM 9974 / NBRC 100139 / OT-3).